The primary structure comprises 182 residues: Protein Syd (182 aa).

It belongs to the Syd family.

It is found in the cell inner membrane. Functionally, interacts with the SecY protein in vivo. May bind preferentially to an uncomplexed state of SecY, thus functioning either as a chelating agent for excess SecY in the cell or as a regulatory factor that negatively controls the translocase function. The chain is Protein Syd from Aeromonas hydrophila subsp. hydrophila (strain ATCC 7966 / DSM 30187 / BCRC 13018 / CCUG 14551 / JCM 1027 / KCTC 2358 / NCIMB 9240 / NCTC 8049).